Reading from the N-terminus, the 352-residue chain is Nicotinate-nucleotide--dimethylbenzimidazole phosphoribosyltransferase (352 aa).

E318 acts as the Proton acceptor in catalysis.

It belongs to the CobT family.

It catalyses the reaction 5,6-dimethylbenzimidazole + nicotinate beta-D-ribonucleotide = alpha-ribazole 5'-phosphate + nicotinate + H(+). Its pathway is nucleoside biosynthesis; alpha-ribazole biosynthesis; alpha-ribazole from 5,6-dimethylbenzimidazole: step 1/2. In terms of biological role, catalyzes the synthesis of alpha-ribazole-5'-phosphate from nicotinate mononucleotide (NAMN) and 5,6-dimethylbenzimidazole (DMB). The chain is Nicotinate-nucleotide--dimethylbenzimidazole phosphoribosyltransferase from Geobacter sulfurreducens (strain ATCC 51573 / DSM 12127 / PCA).